An 89-amino-acid polypeptide reads, in one-letter code: Omega-theraphotoxin-Ba1c (89 aa).

The signal sequence occupies residues 1–23 (MRSLTLAAVLACSLLLVFHTSAA). A propeptide spanning residues 24–50 (EEHEAQEGYLMNPGDTDTALATVDDER) is cleaved from the precursor. 3 disulfides stabilise this stretch: C54–C75, C58–C81, and C67–C86.

Belongs to the neurotoxin 12 (Hwtx-2) family. 06 (TXP1) subfamily. Expressed by the venom gland.

The protein localises to the secreted. Inhibits voltage-gated calcium channels (Cav) in rat cerebellar granule cells. Has insecticidal activity. The chain is Omega-theraphotoxin-Ba1c from Brachypelma albiceps (Mexican golden redrump tarantula).